Consider the following 384-residue polypeptide: FAD-dependent urate hydroxylase (384 aa).

Residues G11, 30 to 31 (EA), S43, and V125 each bind FAD. Substrate-binding positions include N178, R204, and 216–218 (YFF). Residues D285 and 295 to 299 (GQGGC) each bind FAD.

This sequence belongs to the FAD-dependent urate hydroxylase family. In terms of assembly, monomer. It depends on FAD as a cofactor.

The catalysed reaction is urate + NADH + O2 + H(+) = 5-hydroxyisourate + NAD(+) + H2O. It participates in purine metabolism; urate degradation. Catalyzes the hydroxylation of urate to 5-hydroxyisourate (HIU). The chain is FAD-dependent urate hydroxylase from Klebsiella pneumoniae subsp. pneumoniae (strain ATCC 700721 / MGH 78578).